The following is a 204-amino-acid chain: Uridylate kinase (204 aa).

26-31 (GAGKGT) is an ATP binding site. The NMP stretch occupies residues 46–76 (SAGDLLRAEQGRAGSQYGELIKNCIKEGQIV). Residues Arg52, 74 to 76 (QIV), 104 to 107 (GFPR), and Gln111 each bind a ribonucleoside 5'-phosphate. The LID stretch occupies residues 141 to 151 (ERGKTSGRSDD). ATP is bound at residue Arg142. 2 residues coordinate a ribonucleoside 5'-phosphate: Arg148 and Arg159. Arg187 provides a ligand contact to ATP.

The protein belongs to the adenylate kinase family. UMP-CMP kinase subfamily. Monomer. Mg(2+) serves as cofactor.

It localises to the cytoplasm. It is found in the nucleus. It catalyses the reaction UMP + ATP = UDP + ADP. Functionally, catalyzes the phosphorylation of pyrimidine nucleoside monophosphates at the expense of ATP. Plays an important role in de novo pyrimidine nucleotide biosynthesis. Has preference for UMP and dUMP as phosphate acceptors, but can also use CMP, dCMP, AMP, GMP, dGMP and dTMP. ATP and dATP are the best phosphate donors, but can also use GTP, dGTP, dCTP, and dTTP to some degree. The protein is Uridylate kinase of Saccharomyces cerevisiae (strain ATCC 204508 / S288c) (Baker's yeast).